The primary structure comprises 454 residues: L-serine dehydratase TdcG (454 aa).

This sequence belongs to the iron-sulfur dependent L-serine dehydratase family. Requires [4Fe-4S] cluster as cofactor.

It carries out the reaction L-serine = pyruvate + NH4(+). Its pathway is amino-acid degradation; L-threonine degradation via propanoate pathway. The chain is L-serine dehydratase TdcG (tdcG) from Escherichia coli (strain K12).